Reading from the N-terminus, the 449-residue chain is uncharacterized protein (449 aa).

Residues 1–13 (MPKAPKTKLHHAP) show a composition bias toward basic residues. The segment at 1 to 125 (MPKAPKTKLH…SQEEEEYEEL (125 aa)) is disordered. The residue at position 22 (Ser22) is a Phosphoserine. Over residues 73 to 84 (KPSQISAFISNG) the composition is skewed to polar residues. The residue at position 156 (Ser156) is a Phosphoserine.

It belongs to the bystin family.

This is an uncharacterized protein from Schizosaccharomyces pombe (strain 972 / ATCC 24843) (Fission yeast).